Here is a 281-residue protein sequence, read N- to C-terminus: Formamidopyrimidine-DNA glycosylase (281 aa).

The active-site Schiff-base intermediate with DNA is Pro2. Glu3 acts as the Proton donor in catalysis. Lys58 serves as the catalytic Proton donor; for beta-elimination activity. 3 residues coordinate DNA: His94, Arg113, and Arg156. Residues 241–281 (AVYDRVGQPCPGCDCDVARTGGIERMVQSGRSTFFCGRRQR) form an FPG-type; degenerate zinc finger. Arg271 acts as the Proton donor; for delta-elimination activity in catalysis.

It belongs to the FPG family. In terms of assembly, monomer. It depends on Zn(2+) as a cofactor.

It catalyses the reaction Hydrolysis of DNA containing ring-opened 7-methylguanine residues, releasing 2,6-diamino-4-hydroxy-5-(N-methyl)formamidopyrimidine.. The catalysed reaction is 2'-deoxyribonucleotide-(2'-deoxyribose 5'-phosphate)-2'-deoxyribonucleotide-DNA = a 3'-end 2'-deoxyribonucleotide-(2,3-dehydro-2,3-deoxyribose 5'-phosphate)-DNA + a 5'-end 5'-phospho-2'-deoxyribonucleoside-DNA + H(+). Its function is as follows. Involved in base excision repair of DNA damaged by oxidation or by mutagenic agents. Acts as a DNA glycosylase that recognizes and removes damaged bases. Has a preference for oxidized purines, such as 7,8-dihydro-8-oxoguanine (8-oxoG). Has AP (apurinic/apyrimidinic) lyase activity and introduces nicks in the DNA strand. Cleaves the DNA backbone by beta-delta elimination to generate a single-strand break at the site of the removed base with both 3'- and 5'-phosphates. The protein is Formamidopyrimidine-DNA glycosylase of Rhodospirillum rubrum (strain ATCC 11170 / ATH 1.1.1 / DSM 467 / LMG 4362 / NCIMB 8255 / S1).